The following is a 509-amino-acid chain: Heat shock 70 kDa protein 14 (509 aa).

The protein belongs to the heat shock protein 70 family. Component of ribosome-associated complex (RAC), a heterodimer composed of Hsp70/DnaK-type chaperone HSPA14 and Hsp40/DnaJ-type chaperone DNAJC2.

It is found in the cytoplasm. Its subcellular location is the cytosol. In terms of biological role, component of the ribosome-associated complex (RAC), a complex involved in folding or maintaining nascent polypeptides in a folding-competent state. In the RAC complex, binds to the nascent polypeptide chain, while DNAJC2 stimulates its ATPase activity. The chain is Heat shock 70 kDa protein 14 (Hspa14) from Mus musculus (Mouse).